A 305-amino-acid chain; its full sequence is Putative HTH-type transcriptional regulatory protein Saci_1344 (305 aa).

Residues 128–183 (LREKREEKNMSLGELSQRLGVSRISVYDYEKEDSYVSIEVAEKLIEIFGDEVIGDI) form the HTH cro/C1-type domain. The segment at residues 139–158 (LGELSQRLGVSRISVYDYEK) is a DNA-binding region (H-T-H motif).

The polypeptide is Putative HTH-type transcriptional regulatory protein Saci_1344 (Sulfolobus acidocaldarius (strain ATCC 33909 / DSM 639 / JCM 8929 / NBRC 15157 / NCIMB 11770)).